The chain runs to 309 residues: Porphobilinogen deaminase (309 aa).

Cys-241 is modified (S-(dipyrrolylmethanemethyl)cysteine).

It belongs to the HMBS family. In terms of assembly, monomer. Dipyrromethane is required as a cofactor.

It catalyses the reaction 4 porphobilinogen + H2O = hydroxymethylbilane + 4 NH4(+). Its pathway is porphyrin-containing compound metabolism; protoporphyrin-IX biosynthesis; coproporphyrinogen-III from 5-aminolevulinate: step 2/4. Its function is as follows. Tetrapolymerization of the monopyrrole PBG into the hydroxymethylbilane pre-uroporphyrinogen in several discrete steps. The chain is Porphobilinogen deaminase from Bacillus thuringiensis (strain Al Hakam).